The sequence spans 122 residues: MIQQESRLKVADNSGAREILTIKVLGGSGRKFAGVGDMIVATVKQAIPGGNVKKGDVIKAVIVRTVSDVRRADGSYINFDENAAVIVKDDKSPVGTRIFGPVARELRDNDYMRIVSLAPEVL.

Belongs to the universal ribosomal protein uL14 family. In terms of assembly, part of the 50S ribosomal subunit. Forms a cluster with proteins L3 and L19. In the 70S ribosome, L14 and L19 interact and together make contacts with the 16S rRNA in bridges B5 and B8.

Binds to 23S rRNA. Forms part of two intersubunit bridges in the 70S ribosome. The polypeptide is Large ribosomal subunit protein uL14 (Leuconostoc mesenteroides subsp. mesenteroides (strain ATCC 8293 / DSM 20343 / BCRC 11652 / CCM 1803 / JCM 6124 / NCDO 523 / NBRC 100496 / NCIMB 8023 / NCTC 12954 / NRRL B-1118 / 37Y)).